We begin with the raw amino-acid sequence, 175 residues long: PE-PGRS family protein PE_PGRS8 (175 aa).

One can recognise a PE domain in the interval 1–93 (MSFVIAAPEA…AGSYAAAEAA (93 aa)).

It belongs to the mycobacterial PE family. PGRS subfamily.

It is found in the secreted. Its subcellular location is the cell wall. The protein resides in the cell surface. This chain is PE-PGRS family protein PE_PGRS8, found in Mycobacterium tuberculosis (strain ATCC 25618 / H37Rv).